The sequence spans 58 residues: Ribosome modulation factor (58 aa).

Positions 1–28 are disordered; that stretch reads MKRQKRDRFERAHTQGFKAGLHGRSKDN.

It belongs to the ribosome modulation factor family.

The protein resides in the cytoplasm. In terms of biological role, during stationary phase, converts 70S ribosomes to an inactive dimeric form (100S ribosomes). The chain is Ribosome modulation factor from Idiomarina loihiensis (strain ATCC BAA-735 / DSM 15497 / L2-TR).